Here is a 125-residue protein sequence, read N- to C-terminus: Small ribosomal subunit protein eS8 (125 aa).

The tract at residues 1 to 36 is disordered; it reads MKDQGRSTRKRTGGRLHDVSKKKRHQLGREPAETTV. The span at 7 to 26 shows a compositional bias: basic residues; sequence STRKRTGGRLHDVSKKKRHQ. Basic and acidic residues predominate over residues 27–36; it reads LGREPAETTV.

Belongs to the eukaryotic ribosomal protein eS8 family. In terms of assembly, part of the 30S ribosomal subunit.

The polypeptide is Small ribosomal subunit protein eS8 (Haloquadratum walsbyi (strain DSM 16790 / HBSQ001)).